Reading from the N-terminus, the 448-residue chain is Microtubule-associated protein tau (448 aa).

Basic and acidic residues predominate over residues methionine 1–glutamine 16. Residues methionine 1 to lysine 264 are disordered. An N-acetylalanine modification is found at alanine 2. At tyrosine 19 the chain carries Phosphotyrosine. Lysine 33 is covalently cross-linked (Glycyl lysine isopeptide (Lys-Gly) (interchain with G-Cter in ubiquitin)). 2 positions are modified to phosphoserine: serine 35 and serine 50. Residues serine 50 to threonine 60 are compositionally biased toward polar residues. 2 positions are modified to phosphothreonine: threonine 58 and threonine 60. A compositionally biased stretch (low complexity) spans glutamate 71–glycine 89. Threonine 100 carries the post-translational modification Phosphothreonine. A compositionally biased stretch (basic and acidic residues) spans lysine 119–aspartate 135. Position 144 is a phosphothreonine (threonine 144). Arginine 146 carries the omega-N-methylarginine modification. At lysine 154 the chain carries N6,N6-dimethyllysine; alternate. The residue at position 154 (lysine 154) is an N6-acetyllysine; alternate. A phosphothreonine mark is found at threonine 160, threonine 166, threonine 167, and threonine 172. Residues proline 163–threonine 176 are compositionally biased toward low complexity. The segment covering lysine 189–aspartate 200 has biased composition (basic and acidic residues). A phosphoserine mark is found at serine 198 and serine 202. Low complexity predominate over residues arginine 201–serine 221. Tyrosine 204 is modified (phosphotyrosine). A phosphoserine mark is found at serine 205, serine 206, and serine 209. 2 positions are modified to phosphothreonine: threonine 212 and threonine 219. Serine 221 is modified (phosphoserine). Threonine 224 is modified (phosphothreonine). Lysine 232 bears the N6-acetyllysine mark. A Phosphothreonine modification is found at threonine 238. A phosphoserine mark is found at serine 242 and serine 244. Tau/MAP repeat units follow at residues glutamine 251–lysine 281, valine 282–serine 312, valine 313–glutamine 343, and valine 344–asparagine 375. Residue lysine 261 forms a Glycyl lysine isopeptide (Lys-Gly) (interchain with G-Cter in ubiquitin) linkage. Residue lysine 266 is modified to N6-acetyllysine; alternate. Lysine 266 carries the post-translational modification N6-methyllysine; alternate. Lysine 266 participates in a covalent cross-link: Glycyl lysine isopeptide (Lys-Gly) (interchain with G-Cter in ubiquitin); alternate. Position 269 is a phosphoserine (serine 269). Lysine 274 is covalently cross-linked (Glycyl lysine isopeptide (Lys-Gly) (interchain with G-Cter in ubiquitin)). An N6-acetyllysine; alternate modification is found at lysine 288. Lysine 288 is covalently cross-linked (Glycyl lysine isopeptide (Lys-Gly) (interchain with G-Cter in ubiquitin); alternate). Serine 292 and serine 296 each carry phosphoserine. Lysine 297 carries the N6-acetyllysine modification. Cysteine 298 and cysteine 329 are oxidised to a cystine. Phosphoserine is present on serine 300. N6-acetyllysine; alternate is present on lysine 305. Lysine 305 is covalently cross-linked (Glycyl lysine isopeptide (Lys-Gly) (interchain with G-Cter in ubiquitin); alternate). Serine 312 is modified (phosphoserine). Lysine 318 is modified (N6,N6-dimethyllysine; alternate). 3 positions are modified to N6-acetyllysine; alternate: lysine 318, lysine 324, and lysine 328. Glycyl lysine isopeptide (Lys-Gly) (interchain with G-Cter in ubiquitin); alternate cross-links involve residues lysine 318, lysine 324, and lysine 328. Serine 331 is modified (phosphoserine). Lysine 338, lysine 350, and lysine 354 each carry N6-acetyllysine; alternate. Residues lysine 338, lysine 350, and lysine 354 each participate in a glycyl lysine isopeptide (Lys-Gly) (interchain with G-Cter in ubiquitin); alternate cross-link. Omega-N-methylarginine is present on arginine 356. Residue serine 359 is modified to Phosphoserine. A Glycyl lysine isopeptide (Lys-Gly) (interchain with G-Cter in ubiquitin) cross-link involves residue lysine 360. Residue serine 363 is modified to Phosphoserine. N6-acetyllysine; alternate is present on lysine 376. Lysine 376 is covalently cross-linked (Glycyl lysine isopeptide (Lys-Gly) (interchain with G-Cter in ubiquitin); alternate). Lysine 382 is covalently cross-linked (Glycyl lysine isopeptide (Lys-Gly) (interchain with G-Cter in ubiquitin)). An N6-acetyllysine; alternate modification is found at lysine 392. Lysine 392 is covalently cross-linked (Glycyl lysine isopeptide (Lys-Gly) (interchain with G-Cter in ubiquitin); alternate). Position 401 is a phosphotyrosine (tyrosine 401). Serine 403 and serine 407 each carry phosphoserine. The interval valine 405 to isoleucine 424 is disordered. The span at glycine 408–serine 423 shows a compositional bias: polar residues. Threonine 410 bears the Phosphothreonine mark. 4 positions are modified to phosphoserine: serine 411, serine 416, serine 423, and serine 429. Threonine 434 carries the post-translational modification Phosphothreonine.

As to quaternary structure, interacts with MARK1, MARK2, MARK3 and MARK4. Interacts with SQSTM1 when polyubiquitinated. Interacts with PSMC2 through SQSTM1. Interacts with FKBP4. Binds to CSNK1D. Interacts with SGK1. Interacts with PIN1. Interacts with LRRK2. Interacts with LRP1, leading to endocytosis; this interaction is reduced in the presence of LRPAP1/RAP. Post-translationally, polyubiquitinated. Requires functional TRAF6 and may provoke SQSTM1-dependent degradation by the proteasome. Phosphorylation at various serine and threonine residues in S-P or T-P motifs by proline-directed protein kinases (PDPK1, CDK1, CDK5, GSK3, MAPK) (a few sites per protein in interphase, more in mitosis), and at serine residues in K-X-G-S motifs by MAP/microtubule affinity-regulating kinase (MARK1, MARK2, MARK3, MARK4), causing detachment from microtubules, and their disassembly. Phosphorylation at Ser-269 by BRSK1 and BRSK2 in neurons affects ability to bind microtubules and plays a role in neuron polarization. Phosphorylated by PHK. Dephosphorylation at several serine and threonine residues by the serine/threonine phosphatase PPP5C. In terms of processing, O-glycosylated; contains at least 4 GlcNAc. Site-specific or stoichiometric changes in glycosylation may modulate tau function and also play a role in PHF's formation. As to expression, expressed in neurons.

It is found in the cytoplasm. It localises to the cytosol. The protein localises to the cell membrane. Its subcellular location is the cytoskeleton. The protein resides in the cell projection. It is found in the axon. It localises to the dendrite. The protein localises to the secreted. Its function is as follows. Promotes microtubule assembly and stability, and might be involved in the establishment and maintenance of neuronal polarity. The C-terminus binds axonal microtubules while the N-terminus binds neural plasma membrane components, suggesting that tau functions as a linker protein between both. Axonal polarity is predetermined by tau localization (in the neuronal cell) in the domain of the cell body defined by the centrosome. The short isoforms allow plasticity of the cytoskeleton whereas the longer isoforms may preferentially play a role in its stabilization. The polypeptide is Microtubule-associated protein tau (MAPT) (Bos taurus (Bovine)).